A 304-amino-acid chain; its full sequence is Small glutamine-rich tetratricopeptide repeat-containing protein beta (304 aa).

TPR repeat units lie at residues 15-49, 85-118, 119-152, and 153-186; these read LREQ…SPED, ADQL…DPNN, AVYY…DSKY, and SKAY…DPEN. Position 131 is an N6-acetyllysine (Lys131). Phosphoserine occurs at positions 293, 295, and 297.

This sequence belongs to the SGT family. Homooligomerize.

In terms of biological role, co-chaperone that binds directly to HSC70 and HSP70 and regulates their ATPase activity. The polypeptide is Small glutamine-rich tetratricopeptide repeat-containing protein beta (SGTB) (Homo sapiens (Human)).